Consider the following 73-residue polypeptide: RNA-binding protein Hfq (73 aa).

Residues 8–68 form the Sm domain; it reads DQFLNQIRKD…ISTFAPQKNV (61 aa).

The protein belongs to the Hfq family. Homohexamer.

RNA chaperone that binds small regulatory RNA (sRNAs) and mRNAs to facilitate mRNA translational regulation in response to envelope stress, environmental stress and changes in metabolite concentrations. Also binds with high specificity to tRNAs. The protein is RNA-binding protein Hfq of Bacillus velezensis (strain DSM 23117 / BGSC 10A6 / LMG 26770 / FZB42) (Bacillus amyloliquefaciens subsp. plantarum).